We begin with the raw amino-acid sequence, 582 residues long: Aspartate--tRNA(Asp/Asn) ligase (582 aa).

Residue E177 coordinates L-aspartate. Residues 201 to 204 are aspartate; it reads QLFK. R223 contacts L-aspartate. ATP is bound by residues 223-225 and Q232; that span reads RDE. L-aspartate is bound at residue H447. Position 481 (E481) interacts with ATP. R488 is an L-aspartate binding site. 533–536 provides a ligand contact to ATP; sequence GLDR.

It belongs to the class-II aminoacyl-tRNA synthetase family. Type 1 subfamily. As to quaternary structure, homodimer.

The protein resides in the cytoplasm. The catalysed reaction is tRNA(Asx) + L-aspartate + ATP = L-aspartyl-tRNA(Asx) + AMP + diphosphate. Its function is as follows. Aspartyl-tRNA synthetase with relaxed tRNA specificity since it is able to aspartylate not only its cognate tRNA(Asp) but also tRNA(Asn). Reaction proceeds in two steps: L-aspartate is first activated by ATP to form Asp-AMP and then transferred to the acceptor end of tRNA(Asp/Asn). This is Aspartate--tRNA(Asp/Asn) ligase from Chlamydia trachomatis serovar A (strain ATCC VR-571B / DSM 19440 / HAR-13).